The following is a 178-amino-acid chain: 2-C-methyl-D-erythritol 2,4-cyclodiphosphate synthase (178 aa).

Positions 24, 26, and 61 each coordinate a divalent metal cation. A 4-CDP-2-C-methyl-D-erythritol 2-phosphate-binding site is contributed by 24–26; that stretch reads DSH. 150-153 provides a ligand contact to 4-CDP-2-C-methyl-D-erythritol 2-phosphate; it reads TSGE.

Belongs to the IspF family. As to quaternary structure, homotrimer. Requires a divalent metal cation as cofactor.

The catalysed reaction is 4-CDP-2-C-methyl-D-erythritol 2-phosphate = 2-C-methyl-D-erythritol 2,4-cyclic diphosphate + CMP. It participates in isoprenoid biosynthesis; isopentenyl diphosphate biosynthesis via DXP pathway; isopentenyl diphosphate from 1-deoxy-D-xylulose 5-phosphate: step 4/6. Functionally, involved in the biosynthesis of isopentenyl diphosphate (IPP) and dimethylallyl diphosphate (DMAPP), two major building blocks of isoprenoid compounds. Catalyzes the conversion of 4-diphosphocytidyl-2-C-methyl-D-erythritol 2-phosphate (CDP-ME2P) to 2-C-methyl-D-erythritol 2,4-cyclodiphosphate (ME-CPP) with a corresponding release of cytidine 5-monophosphate (CMP). This is 2-C-methyl-D-erythritol 2,4-cyclodiphosphate synthase from Chlamydia trachomatis serovar L2 (strain ATCC VR-902B / DSM 19102 / 434/Bu).